The chain runs to 165 residues: ATP synthase subunit delta, mitochondrial (165 aa).

The transit peptide at 1-27 (MNSLRIARAALRVRPTAVRAPLQRRGY) directs the protein to the mitochondrion.

It belongs to the ATPase epsilon chain family. F-type ATPases have 2 components, CF(1) - the catalytic core - and CF(0) - the membrane proton channel. CF(1) has five subunits: alpha(3), beta(3), gamma(1), delta(1), epsilon(1). CF(0) has three main subunits: a, b and c.

The protein localises to the mitochondrion. The protein resides in the mitochondrion inner membrane. Its function is as follows. Mitochondrial membrane ATP synthase (F(1)F(0) ATP synthase or Complex V) produces ATP from ADP in the presence of a proton gradient across the membrane which is generated by electron transport complexes of the respiratory chain. F-type ATPases consist of two structural domains, F(1) - containing the extramembraneous catalytic core, and F(0) - containing the membrane proton channel, linked together by a central stalk and a peripheral stalk. During catalysis, ATP turnover in the catalytic domain of F(1) is coupled via a rotary mechanism of the central stalk subunits to proton translocation. Part of the complex F(1) domain and of the central stalk which is part of the complex rotary element. Rotation of the central stalk against the surrounding alpha(3)beta(3) subunits leads to hydrolysis of ATP in three separate catalytic sites on the beta subunits. The sequence is that of ATP synthase subunit delta, mitochondrial (des) from Neurospora crassa (strain ATCC 24698 / 74-OR23-1A / CBS 708.71 / DSM 1257 / FGSC 987).